The primary structure comprises 95 residues: Acylphosphatase (95 aa).

Positions 8–95 constitute an Acylphosphatase-like domain; it reads RAKILVRGKV…GNFRTFEIKK (88 aa). Active-site residues include arginine 23 and asparagine 41.

It belongs to the acylphosphatase family.

It catalyses the reaction an acyl phosphate + H2O = a carboxylate + phosphate + H(+). This Leptospira interrogans serogroup Icterohaemorrhagiae serovar copenhageni (strain Fiocruz L1-130) protein is Acylphosphatase (acyP).